The following is a 168-amino-acid chain: DNA damage-inducible transcript 3 protein (168 aa).

Positions 10 to 18 are interaction with TRIB3; sequence LETVSSWEL. Residues 10–26 form an N-terminal region; it reads LETVSSWELEAWYEDLQ. Residues Ser14, Ser15, Ser30, and Ser31 each carry the phosphoserine; by CK2 modification. Residues 30–43 show a composition bias toward polar residues; sequence SSDENGGPYSSSLG. Residues 30-168 are disordered; the sequence is SSDENGGPYS…DRPHVNLQQV (139 aa). Residues 74 to 87 show a composition bias toward low complexity; that stretch reads SSSQSPRSPDSSQS. Phosphoserine; by MAPK14 occurs at positions 78 and 81. Residues 98–161 form the bZIP domain; that stretch reads GRTRKRKQSG…EATRPGSDRP (64 aa). The tract at residues 101–129 is basic motif; that stretch reads RKRKQSGQCPARGTGKQRMKEKEQENERK. Basic and acidic residues predominate over residues 118–162; the sequence is RMKEKEQENERKVAQLAEENERLKQEIERLTREVEATRPGSDRPH. The interval 133-147 is leucine-zipper; that stretch reads LAEENERLKQEIERL.

This sequence belongs to the bZIP family. Heterodimer. Interacts with TCF7L2/TCF4, EP300/P300, HDAC1, HDAC5 and HDAC6. Interacts with TRIB3 which blocks its association with EP300/P300. Interacts with FOXO3, CEBPB and ATF4. In terms of processing, ubiquitinated, leading to its degradation by the proteasome. Phosphorylation at serine residues by MAPK14 enhances its transcriptional activation activity while phosphorylation at serine residues by CK2 inhibits its transcriptional activation activity.

The protein resides in the cytoplasm. The protein localises to the nucleus. Functionally, multifunctional transcription factor in ER stress response. Plays an essential role in the response to a wide variety of cell stresses and induces cell cycle arrest and apoptosis in response to ER stress. Plays a dual role both as an inhibitor of CCAAT/enhancer-binding protein (C/EBP) function and as an activator of other genes. Acts as a dominant-negative regulator of C/EBP-induced transcription: dimerizes with members of the C/EBP family, impairs their association with C/EBP binding sites in the promoter regions, and inhibits the expression of C/EBP regulated genes. Positively regulates the transcription of TRIB3, IL6, IL8, IL23, TNFRSF10B/DR5, PPP1R15A/GADD34, BBC3/PUMA, BCL2L11/BIM and ERO1L. Negatively regulates; expression of BCL2 and MYOD1, ATF4-dependent transcriptional activation of asparagine synthetase (ASNS), CEBPA-dependent transcriptional activation of hepcidin (HAMP) and CEBPB-mediated expression of peroxisome proliferator-activated receptor gamma (PPARG). Inhibits the canonical Wnt signaling pathway by binding to TCF7L2/TCF4, impairing its DNA-binding properties and repressing its transcriptional activity. Plays a regulatory role in the inflammatory response through the induction of caspase-11 (CASP4/CASP11) which induces the activation of caspase-1 (CASP1) and both these caspases increase the activation of pro-IL1B to mature IL1B which is involved in the inflammatory response. This Cricetulus griseus (Chinese hamster) protein is DNA damage-inducible transcript 3 protein (DDIT3).